The chain runs to 463 residues: Type II NADH:quinone oxidoreductase Ndh (463 aa).

Residues 21–25 and Val-89 contribute to the FAD site; that span reads GSGFG. Glu-184 is a catalytic residue. Residues Asp-322 and 333 to 334 each bind FAD; that span reads AQ. A helical membrane pass occupies residues 387–407; it reads FSGFIAWLIWLVLHLAYLIGF.

This sequence belongs to the NADH dehydrogenase family. FAD serves as cofactor.

It localises to the cell inner membrane. The enzyme catalyses a quinone + NADH + H(+) = a quinol + NAD(+). It catalyses the reaction a menaquinone + NADH + H(+) = a menaquinol + NAD(+). The catalysed reaction is a ubiquinone + NADH + H(+) = a ubiquinol + NAD(+). Its activity is regulated as follows. Inhibited by phenothiazine analogs. Inhibited by 2-mercapto-quinazolinones. Not inhibited by classic inhibitors of type I NADH dehydrogenase, such as rotenone, piericidin A and pyridaben. Alternative, nonproton pumping NADH:quinone oxidoreductase that delivers electrons to the respiratory chain by oxidation of NADH and reduction of quinones. Ndh is probably the main NADH dehydrogenase of M.tuberculosis. This Mycobacterium tuberculosis (strain ATCC 25618 / H37Rv) protein is Type II NADH:quinone oxidoreductase Ndh.